We begin with the raw amino-acid sequence, 212 residues long: MSYYTKAKFFTSAPDIRHLKNDTGIEVAFAGRSNAGKSSALNTLTRQRNLARTSKTPGRTQLINVFELEEELRLVDLPGYGFAKVPVAMKKKWQASLGEYLQKRKSLKGLVVLMDIRHPFKDLDQDLIHWAVESNIPVLALLTKADKLKSGKRKAQLLMAQEAALAFMGDVTVQTFSSLNKHGLPELERILDGWFGLDKKSDEEGAVVEGQD.

In terms of domain architecture, EngB-type G spans 23–197; it reads TGIEVAFAGR…ERILDGWFGL (175 aa). Residues 31-38, 58-62, 76-79, 143-146, and 176-178 each bind GTP; these read GRSNAGKS, GRTQL, DLPG, TKAD, and FSS. Mg(2+) contacts are provided by serine 38 and threonine 60.

Belongs to the TRAFAC class TrmE-Era-EngA-EngB-Septin-like GTPase superfamily. EngB GTPase family. Mg(2+) serves as cofactor.

Necessary for normal cell division and for the maintenance of normal septation. This is Probable GTP-binding protein EngB from Alteromonas mediterranea (strain DSM 17117 / CIP 110805 / LMG 28347 / Deep ecotype).